The following is a 1088-amino-acid chain: Methionine S-methyltransferase (1088 aa).

This sequence belongs to the class I-like SAM-binding methyltransferase superfamily. As to quaternary structure, homotetramer.

It is found in the cytoplasm. It carries out the reaction L-methionine + S-adenosyl-L-methionine = S-methyl-L-methionine + S-adenosyl-L-homocysteine. Catalyzes the S-methylmethionine (SMM) biosynthesis from adenosyl-L-homocysteine (AdoMet) and methionine. SMM biosynthesis (by MMT1) and degradation (by HMT-1, HMT-2 and HMT-3) constitute the SMM cycle in plants, which is probably required to achieve short term control of AdoMet level. Also able to catalyze the selenium-methylmethionine (SeMM) from AdoMet and selenium-methionine (SeMet). May play a role in phoem sulfur transport; such function is however not essential. The sequence is that of Methionine S-methyltransferase (MMT1) from Wollastonia biflora (Beach sunflower).